Consider the following 173-residue polypeptide: Photosystem I assembly protein Ycf3 (173 aa).

TPR repeat units follow at residues 35-68 (AFVYYRDGMSAQAEGEYAEALEYYEEALTLEEDT), 72-105 (GYILYNMGLIYASNGDHDKALELYHQAIELNPRL), and 120-153 (GEKAKEDGDHDGGEALFDQAADYWIRAIRMAPNN).

It belongs to the Ycf3 family.

The protein localises to the cellular thylakoid membrane. Essential for the assembly of the photosystem I (PSI) complex. May act as a chaperone-like factor to guide the assembly of the PSI subunits. This chain is Photosystem I assembly protein Ycf3, found in Trichormus variabilis (strain ATCC 29413 / PCC 7937) (Anabaena variabilis).